A 268-amino-acid chain; its full sequence is Shikimate dehydrogenase (NADP(+)) (268 aa).

Shikimate-binding positions include 15–17 (SKS) and T60. Catalysis depends on K64, which acts as the Proton acceptor. 2 residues coordinate shikimate: N85 and D101. NADP(+) contacts are provided by residues 121 to 125 (GAGGS) and L208. Position 210 (Y210) interacts with shikimate. Residue G230 participates in NADP(+) binding.

This sequence belongs to the shikimate dehydrogenase family. Homodimer.

It carries out the reaction shikimate + NADP(+) = 3-dehydroshikimate + NADPH + H(+). The protein operates within metabolic intermediate biosynthesis; chorismate biosynthesis; chorismate from D-erythrose 4-phosphate and phosphoenolpyruvate: step 4/7. Involved in the biosynthesis of the chorismate, which leads to the biosynthesis of aromatic amino acids. Catalyzes the reversible NADPH linked reduction of 3-dehydroshikimate (DHSA) to yield shikimate (SA). The protein is Shikimate dehydrogenase (NADP(+)) of Helicobacter hepaticus (strain ATCC 51449 / 3B1).